Here is a 583-residue protein sequence, read N- to C-terminus: ATP-dependent lipid A-core flippase (583 aa).

Helical transmembrane passes span 27 to 47 (LAVA…MVSL), 69 to 89 (LLVF…TYCL), 142 to 162 (ALVS…LMFY), 165 to 185 (WQLS…IGFV), and 249 to 269 (AAAN…VLYL). An ABC transmembrane type-1 domain is found at 28–310 (AVAVVALIIN…LTNVTSQFQR (283 aa)). The ABC transporter domain maps to 342–578 (VNVKDISFTY…DGAYAQLHRI (237 aa)). Residue 376-383 (GRSGSGKS) coordinates ATP.

This sequence belongs to the ABC transporter superfamily. Lipid exporter (TC 3.A.1.106) family. Homodimer.

It is found in the cell inner membrane. It catalyses the reaction ATP + H2O + lipid A-core oligosaccharideSide 1 = ADP + phosphate + lipid A-core oligosaccharideSide 2.. Involved in lipopolysaccharide (LPS) biosynthesis. Translocates lipid A-core from the inner to the outer leaflet of the inner membrane. Transmembrane domains (TMD) form a pore in the inner membrane and the ATP-binding domain (NBD) is responsible for energy generation. In Vibrio vulnificus (strain YJ016), this protein is ATP-dependent lipid A-core flippase.